The following is a 119-amino-acid chain: Ribonuclease P protein component (119 aa).

Belongs to the RnpA family. In terms of assembly, consists of a catalytic RNA component (M1 or rnpB) and a protein subunit.

It carries out the reaction Endonucleolytic cleavage of RNA, removing 5'-extranucleotides from tRNA precursor.. RNaseP catalyzes the removal of the 5'-leader sequence from pre-tRNA to produce the mature 5'-terminus. It can also cleave other RNA substrates such as 4.5S RNA. The protein component plays an auxiliary but essential role in vivo by binding to the 5'-leader sequence and broadening the substrate specificity of the ribozyme. This chain is Ribonuclease P protein component, found in Streptococcus pyogenes serotype M5 (strain Manfredo).